Reading from the N-terminus, the 125-residue chain is Lectin (125 aa).

The C-type lectin domain occupies 1–120 (MDYEILFSDE…CGGARRVICE (120 aa)). 2 disulfide bridges follow: C21-C119 and C96-C111.

Homodimer.

Its function is as follows. Role in the defense system of the organism against microorganisms. This calcium-binding lectin binds galactose. The sequence is that of Lectin from Polyandrocarpa misakiensis (Tunicate).